We begin with the raw amino-acid sequence, 63 residues long: MNFNKIFVFVALILAISLGQSEAGWLKKLGKRIERIGQHTRDATIQGLGIAQQAANVAATARG.

Positions 1 to 23 (MNFNKIFVFVALILAISLGQSEA) are cleaved as a signal peptide. R62 is subject to Arginine amide.

The protein belongs to the cecropin family.

The protein localises to the secreted. Cecropins have lytic and antibacterial activity against several Gram-positive and Gram-negative bacteria. This chain is Cecropin-C (CecC), found in Drosophila orena (Fruit fly).